Consider the following 302-residue polypeptide: tRNA pseudouridine synthase B (302 aa).

Residue aspartate 38 is the Nucleophile of the active site.

This sequence belongs to the pseudouridine synthase TruB family. Type 1 subfamily.

The catalysed reaction is uridine(55) in tRNA = pseudouridine(55) in tRNA. Functionally, responsible for synthesis of pseudouridine from uracil-55 in the psi GC loop of transfer RNAs. The chain is tRNA pseudouridine synthase B from Geobacillus thermodenitrificans (strain NG80-2).